The chain runs to 332 residues: Biotin synthase (332 aa).

A Radical SAM core domain is found at 51 to 278 (RTIQLSTLMS…KSYVRLSAGR (228 aa)). [4Fe-4S] cluster-binding residues include cysteine 66, cysteine 70, and cysteine 73. [2Fe-2S] cluster contacts are provided by cysteine 110, cysteine 141, cysteine 201, and arginine 273.

The protein belongs to the radical SAM superfamily. Biotin synthase family. As to quaternary structure, homodimer. Requires [4Fe-4S] cluster as cofactor. [2Fe-2S] cluster serves as cofactor.

The enzyme catalyses (4R,5S)-dethiobiotin + (sulfur carrier)-SH + 2 reduced [2Fe-2S]-[ferredoxin] + 2 S-adenosyl-L-methionine = (sulfur carrier)-H + biotin + 2 5'-deoxyadenosine + 2 L-methionine + 2 oxidized [2Fe-2S]-[ferredoxin]. Its pathway is cofactor biosynthesis; biotin biosynthesis; biotin from 7,8-diaminononanoate: step 2/2. Catalyzes the conversion of dethiobiotin (DTB) to biotin by the insertion of a sulfur atom into dethiobiotin via a radical-based mechanism. The polypeptide is Biotin synthase (Haemophilus influenzae (strain PittGG)).